A 248-amino-acid chain; its full sequence is PF03932 family protein CutC (248 aa).

It belongs to the CutC family. As to quaternary structure, homodimer.

Its subcellular location is the cytoplasm. The sequence is that of PF03932 family protein CutC from Salmonella enteritidis PT4 (strain P125109).